The primary structure comprises 505 residues: Maturase K (505 aa).

The protein belongs to the intron maturase 2 family. MatK subfamily.

Its subcellular location is the plastid. It is found in the chloroplast. Functionally, usually encoded in the trnK tRNA gene intron. Probably assists in splicing its own and other chloroplast group II introns. The chain is Maturase K from Portulacaria afra (Elephant's food).